Consider the following 181-residue polypeptide: Oligoribonuclease (181 aa).

An Exonuclease domain is found at L8–M171. Y129 is a catalytic residue.

The protein belongs to the oligoribonuclease family.

It is found in the cytoplasm. 3'-to-5' exoribonuclease specific for small oligoribonucleotides. In Chromobacterium violaceum (strain ATCC 12472 / DSM 30191 / JCM 1249 / CCUG 213 / NBRC 12614 / NCIMB 9131 / NCTC 9757 / MK), this protein is Oligoribonuclease.